Reading from the N-terminus, the 201-residue chain is 3-isopropylmalate dehydratase small subunit (201 aa).

This sequence belongs to the LeuD family. LeuD type 1 subfamily. As to quaternary structure, heterodimer of LeuC and LeuD.

The catalysed reaction is (2R,3S)-3-isopropylmalate = (2S)-2-isopropylmalate. Its pathway is amino-acid biosynthesis; L-leucine biosynthesis; L-leucine from 3-methyl-2-oxobutanoate: step 2/4. Catalyzes the isomerization between 2-isopropylmalate and 3-isopropylmalate, via the formation of 2-isopropylmaleate. This chain is 3-isopropylmalate dehydratase small subunit, found in Shewanella baltica (strain OS223).